The chain runs to 132 residues: Small ribosomal subunit protein uS11 (132 aa).

The segment at 108–132 (GRIEDVTPVPHDSCRPKGGRRGRRV) is disordered.

The protein belongs to the universal ribosomal protein uS11 family. In terms of assembly, part of the 30S ribosomal subunit.

Located on the platform of the 30S subunit. This is Small ribosomal subunit protein uS11 from Methanoregula boonei (strain DSM 21154 / JCM 14090 / 6A8).